A 491-amino-acid polypeptide reads, in one-letter code: LETM1 domain-containing protein LETM2, mitochondrial (491 aa).

A mitochondrion-targeting transit peptide spans 1–25; sequence MAFYSYNSVLAIARTRFPSHFVHPT. Topologically, residues 26–177 are mitochondrial intermembrane; it reads CSSYSPSCAF…LLRTCVDFFR (152 aa). Polar residues predominate over residues 94-109; sequence EQATKHPQVTSPQATK. A disordered region spans residues 94–115; sequence EQATKHPQVTSPQATKETGMEI. Residues 178 to 198 form a helical membrane-spanning segment; the sequence is LVPFMVFLIVPFMEFLLPVFL. Residues 199–491 are Mitochondrial matrix-facing; it reads KLFPEMLPST…QNSKASSKGA (293 aa). Residues 208–235 are a coiled coil; sequence TFESESKKEEKQKKKMAVKLELAKFLQE. In terms of domain architecture, Letm1 RBD spans 221–438; it reads KKMAVKLELA…LAPQLKGTKD (218 aa). The tract at residues 435-491 is disordered; sequence GTKDEDFIQPPPVTSSPITPSTPISLPKGPITSSEEPTLQAKSQMTAQNSKASSKGA. The span at 449–461 shows a compositional bias: low complexity; the sequence is SSPITPSTPISLP. Residues 465–491 are compositionally biased toward polar residues; the sequence is ITSSEEPTLQAKSQMTAQNSKASSKGA.

The protein resides in the mitochondrion inner membrane. The sequence is that of LETM1 domain-containing protein LETM2, mitochondrial (LETM2) from Homo sapiens (Human).